A 75-amino-acid chain; its full sequence is DNA-directed RNA polymerase subunit omega (75 aa).

This sequence belongs to the RNA polymerase subunit omega family. In cyanobacteria the RNAP catalytic core is composed of 2 alpha, 1 beta, 1 beta', 1 gamma and 1 omega subunit. When a sigma factor is associated with the core the holoenzyme is formed, which can initiate transcription.

The catalysed reaction is RNA(n) + a ribonucleoside 5'-triphosphate = RNA(n+1) + diphosphate. In terms of biological role, promotes RNA polymerase assembly. Latches the N- and C-terminal regions of the beta' subunit thereby facilitating its interaction with the beta and alpha subunits. This is DNA-directed RNA polymerase subunit omega from Prochlorococcus marinus (strain MIT 9211).